The sequence spans 212 residues: Thylakoid membrane protein slr1949 (212 aa).

The helical transmembrane segment at 109-131 (WVQDGLLLLLALGLCGISGYRLW) threads the bilayer. Residues 180-212 (PNRRQRKQYETRLQALRQSAAKMKAKTQKAKAL) are a coiled coil.

Its subcellular location is the cellular thylakoid membrane. The chain is Thylakoid membrane protein slr1949 from Synechocystis sp. (strain ATCC 27184 / PCC 6803 / Kazusa).